A 249-amino-acid chain; its full sequence is MEELILGIVQGLTEFLPISSSGHLAIFTAIFNSTPDVGYFAFLHLATFLAVLIFVKSEVFEIINGISKKDKEYINLASKLVLSTIPAVFVGLFFGDFIESVFSSTYLIGIFLSITGILMLLSDKLNKNLKTIKSIPYFDALIVGVFQAFSVLPGISRSGTTLFAALFLGMKKEDAVKYSFLMSLPVTFGAGILELHNVAFSTEQIFGFVISFLTGLLGLYLVKRMVIGGKLKIFGYYCFLASFFVLTFL.

A run of 8 helical transmembrane segments spans residues 11–31 (GLTE…TAIF), 35–55 (PDVG…LIFV), 80–100 (LVLS…FIES), 101–121 (VFSS…LMLL), 135–155 (IPYF…LPGI), 180–200 (FLMS…NVAF), 202–222 (TEQI…LYLV), and 226–246 (VIGG…FFVL).

The protein belongs to the UppP family.

It is found in the cell membrane. It catalyses the reaction di-trans,octa-cis-undecaprenyl diphosphate + H2O = di-trans,octa-cis-undecaprenyl phosphate + phosphate + H(+). In terms of biological role, catalyzes the dephosphorylation of undecaprenyl diphosphate (UPP). This Methanococcus maripaludis (strain C7 / ATCC BAA-1331) protein is Undecaprenyl-diphosphatase.